The sequence spans 209 residues: MSKRPILIGITGGTGSGKSTVSKEICRRFDKELIVMIEQDSYYKDQSHLSIEERVKTNYDHPNAFDTELLVKHLKELSYWSKVEKPIYDFELHNRKNETEIVEPTEIIIVEGILVLEEKEIRDLLDIKIYVDTDADVRIIRRLVRDIKERGRSLDSVINQYLNVVRPMHMQFIEPSKRYADIIIPEGGHNKVAIDIIVGNIKQMVQKSE.

12–19 (GGTGSGKS) is a binding site for ATP.

This sequence belongs to the uridine kinase family.

The protein resides in the cytoplasm. It carries out the reaction uridine + ATP = UMP + ADP + H(+). It catalyses the reaction cytidine + ATP = CMP + ADP + H(+). The protein operates within pyrimidine metabolism; CTP biosynthesis via salvage pathway; CTP from cytidine: step 1/3. Its pathway is pyrimidine metabolism; UMP biosynthesis via salvage pathway; UMP from uridine: step 1/1. The sequence is that of Uridine kinase from Clostridium tetani (strain Massachusetts / E88).